Consider the following 262-residue polypeptide: Acyl-[acyl-carrier-protein]--UDP-N-acetylglucosamine O-acyltransferase (262 aa).

Belongs to the transferase hexapeptide repeat family. LpxA subfamily. As to quaternary structure, homotrimer.

It localises to the cytoplasm. The enzyme catalyses a (3R)-hydroxyacyl-[ACP] + UDP-N-acetyl-alpha-D-glucosamine = a UDP-3-O-[(3R)-3-hydroxyacyl]-N-acetyl-alpha-D-glucosamine + holo-[ACP]. It functions in the pathway glycolipid biosynthesis; lipid IV(A) biosynthesis; lipid IV(A) from (3R)-3-hydroxytetradecanoyl-[acyl-carrier-protein] and UDP-N-acetyl-alpha-D-glucosamine: step 1/6. Its function is as follows. Involved in the biosynthesis of lipid A, a phosphorylated glycolipid that anchors the lipopolysaccharide to the outer membrane of the cell. The protein is Acyl-[acyl-carrier-protein]--UDP-N-acetylglucosamine O-acyltransferase of Haemophilus influenzae (strain PittEE).